The chain runs to 76 residues: Kappa-actitoxin-Avd4n (76 aa).

Residues 1-19 (MNKAFFLCLVVLCAAVVFA) form the signal peptide. Positions 20–31 (AEDLQKGKHAPF) are excised as a propeptide. 2 disulfide bridges follow: Cys37-Cys72 and Cys39-Cys65.

The protein belongs to the sea anemone type 3 (BDS) potassium channel toxin family. Post-translationally, lacks the conventional Cys residue at position 55. Thus, only 2 disulfide are possible present. Experimental results show no expression in the ectodermal tissue from the distal and proximal tentacles, body wall, and oral disk. Since paralogs are expressed in this tissue, an expression of this toxin in this tissue is probable. The negative results could be explained by the very low abundance of EST sequences.

It is found in the secreted. It localises to the nematocyst. In terms of biological role, blocks Kv3 voltage-gated potassium channels. Reduces blood pressure. The polypeptide is Kappa-actitoxin-Avd4n (Anemonia viridis (Snakelocks anemone)).